Here is a 363-residue protein sequence, read N- to C-terminus: Oxygen-dependent coproporphyrinogen-III oxidase (363 aa).

Residue serine 119 coordinates substrate. Residues histidine 123 and histidine 133 each coordinate a divalent metal cation. The active-site Proton donor is the histidine 133. Residue 135–137 participates in substrate binding; it reads NYR. Residues histidine 167 and histidine 197 each contribute to the a divalent metal cation site. Positions 287 to 322 are important for dimerization; that stretch reads YVEFNLVWDRGTIFGLQTNGRTESILMSLPPLVRWE.

It belongs to the aerobic coproporphyrinogen-III oxidase family. Homodimer. A divalent metal cation is required as a cofactor.

It is found in the cytoplasm. The catalysed reaction is coproporphyrinogen III + O2 + 2 H(+) = protoporphyrinogen IX + 2 CO2 + 2 H2O. The protein operates within porphyrin-containing compound metabolism; protoporphyrin-IX biosynthesis; protoporphyrinogen-IX from coproporphyrinogen-III (O2 route): step 1/1. In terms of biological role, involved in the heme and chlorophyll biosynthesis. Catalyzes the aerobic oxidative decarboxylation of propionate groups of rings A and B of coproporphyrinogen-III to yield the vinyl groups in protoporphyrinogen-IX. The chain is Oxygen-dependent coproporphyrinogen-III oxidase from Parasynechococcus marenigrum (strain WH8102).